A 157-amino-acid polypeptide reads, in one-letter code: 2-C-methyl-D-erythritol 2,4-cyclodiphosphate synthase (157 aa).

A divalent metal cation is bound by residues D8 and H10. Residues 8–10 and 34–35 contribute to the 4-CDP-2-C-methyl-D-erythritol 2-phosphate site; these read DVH and HS. H42 serves as a coordination point for a divalent metal cation. 4-CDP-2-C-methyl-D-erythritol 2-phosphate is bound by residues 56–58, 61–65, 100–106, 132–135, F139, and R142; these read DIG, FPDTD, AQAPKMA, and TTTE.

Belongs to the IspF family. Homotrimer. It depends on a divalent metal cation as a cofactor.

The enzyme catalyses 4-CDP-2-C-methyl-D-erythritol 2-phosphate = 2-C-methyl-D-erythritol 2,4-cyclic diphosphate + CMP. It participates in isoprenoid biosynthesis; isopentenyl diphosphate biosynthesis via DXP pathway; isopentenyl diphosphate from 1-deoxy-D-xylulose 5-phosphate: step 4/6. Functionally, involved in the biosynthesis of isopentenyl diphosphate (IPP) and dimethylallyl diphosphate (DMAPP), two major building blocks of isoprenoid compounds. Catalyzes the conversion of 4-diphosphocytidyl-2-C-methyl-D-erythritol 2-phosphate (CDP-ME2P) to 2-C-methyl-D-erythritol 2,4-cyclodiphosphate (ME-CPP) with a corresponding release of cytidine 5-monophosphate (CMP). The polypeptide is 2-C-methyl-D-erythritol 2,4-cyclodiphosphate synthase (Pseudomonas putida (strain ATCC 700007 / DSM 6899 / JCM 31910 / BCRC 17059 / LMG 24140 / F1)).